Reading from the N-terminus, the 316-residue chain is MSLGIMEEEDLAEYFRLQYGERLLQMLQKLPNVEGASESPSIWLLEKKKETEIMHQTMVQKKKMFQRRMETLNLRWEELGVKEAQLKAHIQKSEQFIQENDQKRIRAMKKANKERELKCQHMQELTKRKQEMVALRLEHQRLSAKLKDYYIFNKYLEKVVENSEFEEIHEVIARYKTLVSMRHDLMQSAQEGQEKIERAKARLARYMEEKDDEILQQNNELARLQMRFDRARSNVIFWESRWAHIQNTAAKKTLLLGTIKMATLNLFQIVSKHLKEVTEVALEDTHKQLDMIQQFIQDRSDIWAEVKKKEQQRVRI.

Coiled coils occupy residues 39–146 (SPSI…SAKL) and 178–232 (LVSM…DRAR).

It belongs to the CFAP73 family. As to quaternary structure, interacts with ODF1 and ODF2. Interacts with CCDC38. Interacts with CCDC146. Interacts with CFAP53.

It localises to the cytoplasm. Its subcellular location is the perinuclear region. The protein resides in the cytoskeleton. The protein localises to the cell projection. It is found in the cilium. It localises to the flagellum. Its subcellular location is the microtubule organizing center. The protein resides in the centrosome. Functionally, essential for male fertility. Required for sperm development. The sequence is that of Coiled-coil domain-containing protein 42 from Homo sapiens (Human).